The sequence spans 338 residues: Rho GTPase-activating protein gacA (338 aa).

In terms of domain architecture, Rho-GAP spans 149–327; it reads NTLEHVEDEG…NVLSHKVAVH (179 aa).

It is found in the cytoplasm. In terms of biological role, rho GTPase-activating protein involved in the signal transduction pathway. In Dictyostelium discoideum (Social amoeba), this protein is Rho GTPase-activating protein gacA (gacA).